A 933-amino-acid chain; its full sequence is MKLKETLNLGKTAFPMRAGLPNKEPQWQAAWEQAELYKKRQELNAGKPAFHLHDGPPYANGNIHVGHALNKISKDIIVRSKSMSGFQAPYVPGWDTHGLPIEQVLAKQGIKRKEMDLAEYLEMCRQYALSQVDKQRDDFKRLGVSADWENPYVTLDPQFEADQIRVFGAMAEKGYIYRGAKPVYWSWSSESALAEAEIEYHDIDSTSLYYANKVKDGKGILDTNTYIVVWTTTPFTVTASRGLTVGPDMDYLVVKPAGSDRQYVVAEGLLDSLAGKFGWESFETLASHKGADLEYIVTEHPWDTDVEELVILGDHVTLESGTGIVHTAPGFGEDDYNVGTKYKLEVAVTVDERGLMTENAGPDFHGQFYNKVTPIVIDKLGDLLLAQEVINHSYPFDWRTKKPIIWRAVPQWFASVSDFRQDILDEIEKTTFHPSWGETRLYNMIRDRGDWVISRQRAWGVPLPIFYAEDGTAIMTKEVTDHVADLFQENGSIIWWQKEAKDLLPEGFTHPGSPNGEFTKETDIMDVWFDSGSSWNGVMNTKENLSYPADLYLEGSDQYRGWFNSSLITSVAVNGHAPYKAILSQGFVLDGKGEKMSKSKGNIISPNDVAKQYGADILRLWVASVDTDNDVRVSMEILGQVSETYRKIRNTLRFLIANTSDFNPATDTVAYADLGAVDKYMTIVFNQLVATITDAYERYDFMAIYKAVVNFVTVDLSAFYLDFAKDVVYIEAANSLERRRMQTVFYDILVKITKLLTPILPHTTEEIWSYLEHESEAFVQLAEMPVAETFSAQEDILEAWSAFMTLRTQAQKALEEARNAKIIGKSLEAHLTIYASEEVKTLLTALDSDIALLLIVSQLTIADLADAPADAVAFEGIAFMVEHAIGEVCERSRRIDPTTRMRSYNAFVCDHSAKIIEENFPEAVAEGFEESDK.

The 'HIGH' region motif lies at 57–67 (PYANGNIHVGH). Glutamate 554 is a binding site for L-isoleucyl-5'-AMP. The 'KMSKS' region signature appears at 595 to 599 (KMSKS). Lysine 598 serves as a coordination point for ATP.

The protein belongs to the class-I aminoacyl-tRNA synthetase family. IleS type 1 subfamily. In terms of assembly, monomer.

The protein resides in the cytoplasm. The enzyme catalyses tRNA(Ile) + L-isoleucine + ATP = L-isoleucyl-tRNA(Ile) + AMP + diphosphate. Functionally, catalyzes the attachment of isoleucine to tRNA(Ile). As IleRS can inadvertently accommodate and process structurally similar amino acids such as valine, to avoid such errors it has two additional distinct tRNA(Ile)-dependent editing activities. One activity is designated as 'pretransfer' editing and involves the hydrolysis of activated Val-AMP. The other activity is designated 'posttransfer' editing and involves deacylation of mischarged Val-tRNA(Ile). The sequence is that of Isoleucine--tRNA ligase from Streptococcus pyogenes serotype M28 (strain MGAS6180).